The chain runs to 132 residues: Nickel-responsive regulator (132 aa).

Ni(2+) contacts are provided by His76, His87, His89, and Cys95.

Belongs to the transcriptional regulatory CopG/NikR family. As to quaternary structure, homotetramer. Requires Ni(2+) as cofactor.

Transcriptional repressor of the nikABCDE operon. Is active in the presence of excessive concentrations of intracellular nickel. In Klebsiella pneumoniae (strain 342), this protein is Nickel-responsive regulator.